The chain runs to 113 residues: UPF0102 protein Mfla_2283 (113 aa).

This sequence belongs to the UPF0102 family.

This chain is UPF0102 protein Mfla_2283, found in Methylobacillus flagellatus (strain ATCC 51484 / DSM 6875 / VKM B-1610 / KT).